Here is a 509-residue protein sequence, read N- to C-terminus: ATP synthase subunit alpha (509 aa).

Residue 169 to 176 participates in ATP binding; sequence GDRQTGKT.

Belongs to the ATPase alpha/beta chains family. As to quaternary structure, F-type ATPases have 2 components, CF(1) - the catalytic core - and CF(0) - the membrane proton channel. CF(1) has five subunits: alpha(3), beta(3), gamma(1), delta(1), epsilon(1). CF(0) has three main subunits: a(1), b(2) and c(9-12). The alpha and beta chains form an alternating ring which encloses part of the gamma chain. CF(1) is attached to CF(0) by a central stalk formed by the gamma and epsilon chains, while a peripheral stalk is formed by the delta and b chains.

It localises to the cell inner membrane. The enzyme catalyses ATP + H2O + 4 H(+)(in) = ADP + phosphate + 5 H(+)(out). Produces ATP from ADP in the presence of a proton gradient across the membrane. The alpha chain is a regulatory subunit. This Sinorhizobium fredii (strain NBRC 101917 / NGR234) protein is ATP synthase subunit alpha.